The chain runs to 132 residues: uncharacterized protein (132 aa).

Transmembrane regions (helical) follow at residues 19 to 39, 58 to 78, and 93 to 113; these read FTWI…FIFL, IGLR…VAVM, and LIAY…CAAL.

The protein belongs to the bacteriophage holin family. Cp-1 holin subfamily.

The protein localises to the cell membrane. This is an uncharacterized protein from Clostridium perfringens.